Reading from the N-terminus, the 471-residue chain is ATP synthase subunit beta (471 aa).

156–163 (GGAGVGKT) contributes to the ATP binding site.

The protein belongs to the ATPase alpha/beta chains family. As to quaternary structure, F-type ATPases have 2 components, CF(1) - the catalytic core - and CF(0) - the membrane proton channel. CF(1) has five subunits: alpha(3), beta(3), gamma(1), delta(1), epsilon(1). CF(0) has three main subunits: a(1), b(2) and c(9-12). The alpha and beta chains form an alternating ring which encloses part of the gamma chain. CF(1) is attached to CF(0) by a central stalk formed by the gamma and epsilon chains, while a peripheral stalk is formed by the delta and b chains.

It is found in the cell membrane. The enzyme catalyses ATP + H2O + 4 H(+)(in) = ADP + phosphate + 5 H(+)(out). Functionally, produces ATP from ADP in the presence of a proton gradient across the membrane. The catalytic sites are hosted primarily by the beta subunits. In Macrococcus caseolyticus (strain JCSC5402) (Macrococcoides caseolyticum), this protein is ATP synthase subunit beta.